A 56-amino-acid chain; its full sequence is Large ribosomal subunit protein bL32 (56 aa).

The tract at residues methionine 1 to alanine 26 is disordered.

The protein belongs to the bacterial ribosomal protein bL32 family.

The polypeptide is Large ribosomal subunit protein bL32 (Erwinia tasmaniensis (strain DSM 17950 / CFBP 7177 / CIP 109463 / NCPPB 4357 / Et1/99)).